Here is a 548-residue protein sequence, read N- to C-terminus: Asparagine--tRNA ligase, cytoplasmic (548 aa).

Residues 1 to 25 form a disordered region; it reads MVLAELYVSDREGSDATGDGTKEKP. Positions 8–25 are enriched in basic and acidic residues; it reads VSDREGSDATGDGTKEKP. Phosphoserine is present on serine 61. The interval 69–91 is disordered; the sequence is MWHREQMKSESREKKEAEDSLRR. The span at 71 to 91 shows a compositional bias: basic and acidic residues; that stretch reads HREQMKSESREKKEAEDSLRR. The residue at position 244 (lysine 244) is an N6-acetyllysine. Serine 482 carries the post-translational modification Phosphoserine. Lysine 490 bears the N6-acetyllysine mark.

Belongs to the class-II aminoacyl-tRNA synthetase family. As to quaternary structure, homodimer.

The protein localises to the cytoplasm. The catalysed reaction is tRNA(Asn) + L-asparagine + ATP = L-asparaginyl-tRNA(Asn) + AMP + diphosphate + H(+). In terms of biological role, catalyzes the attachment of asparagine to tRNA(Asn) in a two-step reaction: asparagine is first activated by ATP to form Asn-AMP and then transferred to the acceptor end of tRNA(Asn). In addition to its essential role in protein synthesis, acts as a signaling molecule that induced migration of CCR3-expressing cells. Has an essential role in the development of the cerebral cortex, being required for proper proliferation of radial glial cells. This chain is Asparagine--tRNA ligase, cytoplasmic, found in Homo sapiens (Human).